Reading from the N-terminus, the 247-residue chain is UPF0309 protein Teth39_1980 (247 aa).

The region spanning 31–213 (IANSLLKEED…EAEIVFIMIK (183 aa)) is the SIS domain.

It belongs to the UPF0309 family.

The polypeptide is UPF0309 protein Teth39_1980 (Thermoanaerobacter pseudethanolicus (strain ATCC 33223 / 39E) (Clostridium thermohydrosulfuricum)).